The primary structure comprises 336 residues: Biotin synthase (336 aa).

The region spanning 54–281 (NAIQLSTLLS…KAMVRLSAGR (228 aa)) is the Radical SAM core domain. [4Fe-4S] cluster contacts are provided by Cys69, Cys73, and Cys76. The [2Fe-2S] cluster site is built by Cys113, Cys144, Cys204, and Arg276.

Belongs to the radical SAM superfamily. Biotin synthase family. As to quaternary structure, homodimer. It depends on [4Fe-4S] cluster as a cofactor. The cofactor is [2Fe-2S] cluster.

It catalyses the reaction (4R,5S)-dethiobiotin + (sulfur carrier)-SH + 2 reduced [2Fe-2S]-[ferredoxin] + 2 S-adenosyl-L-methionine = (sulfur carrier)-H + biotin + 2 5'-deoxyadenosine + 2 L-methionine + 2 oxidized [2Fe-2S]-[ferredoxin]. It functions in the pathway cofactor biosynthesis; biotin biosynthesis; biotin from 7,8-diaminononanoate: step 2/2. Its function is as follows. Catalyzes the conversion of dethiobiotin (DTB) to biotin by the insertion of a sulfur atom into dethiobiotin via a radical-based mechanism. This Burkholderia pseudomallei (strain 1106a) protein is Biotin synthase.